A 372-amino-acid chain; its full sequence is Alginate lyase (372 aa).

Residues 1–22 form the signal peptide; sequence MKTRLALPCLLGSLLLSSAVHA. Residues 61–62, 134–135, and Tyr252 contribute to the substrate site; these read SK and HT.

It belongs to the polysaccharide lyase 5 family.

The protein resides in the periplasm. The enzyme catalyses Eliminative cleavage of alginate to give oligosaccharides with 4-deoxy-alpha-L-erythro-hex-4-enuronosyl groups at their non-reducing ends and beta-D-mannuronate at their reducing end.. Its activity is regulated as follows. Monovalent cations such as potassium and sodium enhance activity, as well as a combined action of these cations with magnesium. However, other cations like calcium, cobalt, manganese and zinc, or the presence of EDTA, do not affect the enzymatic activity. Its function is as follows. Catalyzes the depolymerization of alginate by cleaving the beta-1,4 glycosidic bond between two adjacent sugar residues via a beta-elimination mechanism. Degrades deacetylated polymannuronate alginate more efficiently than non-deacetylated polyM. Is able to degrade its own alginate, but at a lower efficiency than that produced from M.pyriferia and P.aeruginosa. May serve to degrade mislocalized alginate that is trapped in the periplasmic space. The protein is Alginate lyase of Azotobacter chroococcum mcd 1.